Reading from the N-terminus, the 89-residue chain is Large ribosomal subunit protein bL27 (89 aa).

Residues 1–22 (MAHKKGASSSRNGRDSNAQRLG) are disordered. Polar residues predominate over residues 7–19 (ASSSRNGRDSNAQ).

It belongs to the bacterial ribosomal protein bL27 family.

The chain is Large ribosomal subunit protein bL27 from Cutibacterium acnes (strain DSM 16379 / KPA171202) (Propionibacterium acnes).